Here is a 354-residue protein sequence, read N- to C-terminus: Galactose-1-phosphate uridylyltransferase (354 aa).

The tract at residues 36-72 (TVTTSEVRRDPLLGDSAPSRLAPQGRTYHPPADQCPL) is disordered. Zn(2+) contacts are provided by Cys-70, Cys-73, and His-114. Position 154 (Asn-154) interacts with UDP-alpha-D-glucose. His-165 lines the Zn(2+) pocket. His-167 functions as the Tele-UMP-histidine intermediate in the catalytic mechanism. UDP-alpha-D-glucose-binding residues include Gln-169 and Gln-332.

Belongs to the galactose-1-phosphate uridylyltransferase type 1 family. The cofactor is Zn(2+).

It carries out the reaction alpha-D-galactose 1-phosphate + UDP-alpha-D-glucose = alpha-D-glucose 1-phosphate + UDP-alpha-D-galactose. It participates in carbohydrate metabolism; galactose metabolism. This is Galactose-1-phosphate uridylyltransferase (galT) from Streptomyces lividans.